The sequence spans 201 residues: MSRYRGPRFKKIRRLGALPGLTNKRPRAGSDLRNQSRSGKRSQYRIRLEEKQKLRFHYGITERQLLKYVRIARKAKGSTGQVLLQLLEMRLDNILFRLGMAPTIPGARQLVNHRHILVNGRIVDIPSYRCKPQDTIMARDEQKSIALIQNSLDLSPREELPKHLTLNPFPYKGLVNQIIDSKWVGLKINELLVVEYYSRQT.

The disordered stretch occupies residues 15 to 43 (LGALPGLTNKRPRAGSDLRNQSRSGKRSQ). Residues 89–149 (MRLDNILFRL…DEQKSIALIQ (61 aa)) form the S4 RNA-binding domain.

Component of the chloroplast small ribosomal subunit (SSU). Mature 70S chloroplast ribosomes of higher plants consist of a small (30S) and a large (50S) subunit. The 30S small subunit contains 1 molecule of ribosomal RNA (16S rRNA) and 24 different proteins. The 50S large subunit contains 3 rRNA molecules (23S, 5S and 4.5S rRNA) and 33 different proteins.

The protein localises to the plastid. The protein resides in the chloroplast. Component of the chloroplast ribosome (chloro-ribosome), a dedicated translation machinery responsible for the synthesis of chloroplast genome-encoded proteins, including proteins of the transcription and translation machinery and components of the photosynthetic apparatus. The sequence is that of Small ribosomal subunit protein uS4c (rps4) from Spinacia oleracea (Spinach).